Here is a 266-residue protein sequence, read N- to C-terminus: Glucosamine-6-phosphate deaminase (266 aa).

The active-site Proton acceptor; for enolization step is the Asp72. Asp141 (for ring-opening step) is an active-site residue. The active-site Proton acceptor; for ring-opening step is the His143. Glu148 functions as the For ring-opening step in the catalytic mechanism.

This sequence belongs to the glucosamine/galactosamine-6-phosphate isomerase family. NagB subfamily. Homohexamer.

The enzyme catalyses alpha-D-glucosamine 6-phosphate + H2O = beta-D-fructose 6-phosphate + NH4(+). It participates in amino-sugar metabolism; N-acetylneuraminate degradation; D-fructose 6-phosphate from N-acetylneuraminate: step 5/5. Its activity is regulated as follows. Allosterically activated by N-acetylglucosamine 6-phosphate (GlcNAc6P). Catalyzes the reversible isomerization-deamination of glucosamine 6-phosphate (GlcN6P) to form fructose 6-phosphate (Fru6P) and ammonium ion. This chain is Glucosamine-6-phosphate deaminase, found in Salmonella typhi.